A 258-amino-acid chain; its full sequence is Regulatory protein RecX (258 aa).

It belongs to the RecX family.

It is found in the cytoplasm. In terms of biological role, modulates RecA activity. The sequence is that of Regulatory protein RecX from Streptococcus equi subsp. zooepidemicus (strain MGCS10565).